The following is a 180-amino-acid chain: Shikimate kinase (180 aa).

An ATP-binding site is contributed by 19–24 (GAGKTT). Threonine 23 contacts Mg(2+). The substrate site is built by aspartate 41, arginine 65, and glycine 87. Position 125 (arginine 125) interacts with ATP. Arginine 144 lines the substrate pocket.

The protein belongs to the shikimate kinase family. Monomer. It depends on Mg(2+) as a cofactor.

The protein resides in the cytoplasm. The catalysed reaction is shikimate + ATP = 3-phosphoshikimate + ADP + H(+). It participates in metabolic intermediate biosynthesis; chorismate biosynthesis; chorismate from D-erythrose 4-phosphate and phosphoenolpyruvate: step 5/7. Functionally, catalyzes the specific phosphorylation of the 3-hydroxyl group of shikimic acid using ATP as a cosubstrate. The protein is Shikimate kinase of Acinetobacter baumannii (strain SDF).